The sequence spans 306 residues: MEVTFFGTSAGLPTKERNTQAIALNLEPYSNSIWLFDVGEGTQHQILHHAIKLGKVTHIFITHMHGDHIFGLPGLLSSRSFQGGEQKPLTLVGPKGIKAYVEMSMNLSESHLNYPITYIEIDDHLTYHHDGFTVEAHLLNHGIPSYGYRVMAPETTGTINVEALKNIGLEPGPKYQEVKSHDTFEHNGQVYQSKDFRGESKQGPIVAIFGDTKPCSNERVISRDADVMVHEATYIDGEKHLANNYHHSHIEDVFALIKEANVKRTLITHLSNRYNTEDINEIYQTLIQNEDTPNFNFVKDFDSFKI.

Zn(2+) contacts are provided by histidine 63, histidine 65, aspartate 67, histidine 68, histidine 141, aspartate 211, and histidine 269. The Proton acceptor role is filled by aspartate 67.

Belongs to the RNase Z family. In terms of assembly, homodimer. Zn(2+) is required as a cofactor.

The enzyme catalyses Endonucleolytic cleavage of RNA, removing extra 3' nucleotides from tRNA precursor, generating 3' termini of tRNAs. A 3'-hydroxy group is left at the tRNA terminus and a 5'-phosphoryl group is left at the trailer molecule.. Functionally, zinc phosphodiesterase, which displays some tRNA 3'-processing endonuclease activity. Probably involved in tRNA maturation, by removing a 3'-trailer from precursor tRNA. The chain is Ribonuclease Z from Staphylococcus aureus (strain bovine RF122 / ET3-1).